The chain runs to 166 residues: MIIQGKCHTFGNDIDTDAIIPARYLNTTDPGELARHCMEDADPTFAGRVQKGEIIVAGKNFGCGSSREHAPVAIKAAGVAAVVAASFARIFYRNAINIGLPIFESPEAAAGIKAGDEVKIDAGKGEIVNLTRGETYPVAPFPPFMQELIAAGGLMPYVARKVKTSV.

The protein belongs to the LeuD family. LeuD type 2 subfamily. In terms of assembly, heterodimer of LeuC and LeuD.

It carries out the reaction (2R,3S)-3-isopropylmalate = (2S)-2-isopropylmalate. Its pathway is amino-acid biosynthesis; L-leucine biosynthesis; L-leucine from 3-methyl-2-oxobutanoate: step 2/4. Its function is as follows. Catalyzes the isomerization between 2-isopropylmalate and 3-isopropylmalate, via the formation of 2-isopropylmaleate. This chain is 3-isopropylmalate dehydratase small subunit, found in Moorella thermoacetica (strain ATCC 39073 / JCM 9320).